The chain runs to 310 residues: tRNA dimethylallyltransferase (310 aa).

ATP is bound at residue 11–18 (GPTGVGKT). 13–18 (TGVGKT) contacts substrate.

Belongs to the IPP transferase family. As to quaternary structure, monomer. The cofactor is Mg(2+).

The enzyme catalyses adenosine(37) in tRNA + dimethylallyl diphosphate = N(6)-dimethylallyladenosine(37) in tRNA + diphosphate. Functionally, catalyzes the transfer of a dimethylallyl group onto the adenine at position 37 in tRNAs that read codons beginning with uridine, leading to the formation of N6-(dimethylallyl)adenosine (i(6)A). The protein is tRNA dimethylallyltransferase of Latilactobacillus sakei subsp. sakei (strain 23K) (Lactobacillus sakei subsp. sakei).